The chain runs to 196 residues: Cyclin-dependent kinase inhibitor 6 (196 aa).

Disordered stretches follow at residues 1–36 (MSER…PDSH) and 55–151 (ASDE…RKTP). Residues 124–139 (SEGLGETTTEMESSSA) are compositionally biased toward low complexity. Threonine 152 carries the phosphothreonine; by KIN10 modification.

The protein belongs to the CDI family. ICK/KRP subfamily. Specifically interacts with CDKA-1, but not with CDKB1-1. Interacts with CYCD1-1, CYCD4-1 and RHF1A. Binds to FBL17. Interacts with KIN10. Interacts with CYCD3-1. Post-translationally, ubiquitinated by RHF1A and SCF(FBL17). Ubiquitination leads to its subsequent degradation, thus controlling cell cycle progression. The phosphorylation at Thr-152 by KIN10 represses its activity. As to expression, expressed in newly formed organs such as the shoot apex. Expressed in cotyledon, primary root and marginal region of the leaves as well as in developing pollen.

It is found in the nucleus. The protein resides in the nucleoplasm. Its activity is regulated as follows. Down-regulated by KIN10 under a phosphorylation-dependent manner. In terms of biological role, binds and inhibits CYCD2-1/CDKA-1 complex kinase activity. Regulates cell division which is crucial for plant growth, development and morphogenesis. May inhibit CDK kinases specifically involved in the G1/S phase transition. This Arabidopsis thaliana (Mouse-ear cress) protein is Cyclin-dependent kinase inhibitor 6 (KRP6).